The following is a 476-amino-acid chain: Cys-Gly metallodipeptidase dug1 (476 aa).

His99 serves as a coordination point for Zn(2+). The active site involves Asp101. Asp133 contacts Zn(2+). Glu167 (proton acceptor) is an active-site residue. Zn(2+)-binding residues include Glu168, Asp196, and His446.

It belongs to the peptidase M20A family. As to quaternary structure, homodimer. Component of the GSH degradosomal complex. Zn(2+) is required as a cofactor. It depends on Mn(2+) as a cofactor.

The protein resides in the cytoplasm. Functionally, catalytic component of the GSH degradosomal complex involved in the degradation of glutathione (GSH) and other peptides containing a gamma-glu-X bond. Has a Gly-Cys dipeptidase activity. This Schizosaccharomyces pombe (strain 972 / ATCC 24843) (Fission yeast) protein is Cys-Gly metallodipeptidase dug1 (dug1).